We begin with the raw amino-acid sequence, 147 residues long: MKFTKSLLLLIVAVFASSNAAETFSNFQVTNSDANSPCVTTPVELKVNTCQSACGSILNVLPVTGSTSKFTFNQFGAQDTKCAATPTSSNEFTCVDGKSKVAIGSTTYSVVCVPDKTNSSESDSSDSTRIGASFALFALALLSMLAL.

Residues 1 to 20 (MKFTKSLLLLIVAVFASSNA) form the signal peptide. A lipid anchor (GPI-like-anchor amidated asparagine) is attached at Asn118. Residue Asn118 is glycosylated (N-linked (GlcNAc...) asparagine). Positions 119-147 (SSESDSSDSTRIGASFALFALALLSMLAL) are cleaved as a propeptide — removed in mature form.

Belongs to the ponticulin family. The GPI-like-anchor contains a phosphoceramide group, rather than a phosphatidyl group.

The protein localises to the cell membrane. The chain is Ponticulin-like protein C3 (ponC3) from Dictyostelium discoideum (Social amoeba).